The primary structure comprises 490 residues: Cytochrome P450 2C9 (490 aa).

Cys435 serves as a coordination point for heme.

The protein belongs to the cytochrome P450 family. It depends on heme as a cofactor.

The protein localises to the endoplasmic reticulum membrane. It is found in the microsome membrane. It catalyses the reaction an organic molecule + reduced [NADPH--hemoprotein reductase] + O2 = an alcohol + oxidized [NADPH--hemoprotein reductase] + H2O + H(+). The catalysed reaction is (5Z,8Z,11Z,14Z)-eicosatetraenoate + reduced [NADPH--hemoprotein reductase] + O2 = (8R,9S)-epoxy-(5Z,11Z,14Z)-eicosatrienoate + oxidized [NADPH--hemoprotein reductase] + H2O + H(+). The enzyme catalyses (5Z,8Z,11Z,14Z)-eicosatetraenoate + reduced [NADPH--hemoprotein reductase] + O2 = (8S,9R)-epoxy-(5Z,11Z,14Z)-eicosatrienoate + oxidized [NADPH--hemoprotein reductase] + H2O + H(+). It carries out the reaction (5Z,8Z,11Z,14Z)-eicosatetraenoate + reduced [NADPH--hemoprotein reductase] + O2 = (11R,12S)-epoxy-(5Z,8Z,14Z)-eicosatrienoate + oxidized [NADPH--hemoprotein reductase] + H2O + H(+). It catalyses the reaction (5Z,8Z,11Z,14Z)-eicosatetraenoate + reduced [NADPH--hemoprotein reductase] + O2 = (11S,12R)-epoxy-(5Z,8Z,14Z)-eicosatrienoate + oxidized [NADPH--hemoprotein reductase] + H2O + H(+). The catalysed reaction is (5Z,8Z,11Z,14Z)-eicosatetraenoate + reduced [NADPH--hemoprotein reductase] + O2 = (14R,15S)-epoxy-(5Z,8Z,11Z)-eicosatrienoate + oxidized [NADPH--hemoprotein reductase] + H2O + H(+). The enzyme catalyses (5Z,8Z,11Z,14Z)-eicosatetraenoate + reduced [NADPH--hemoprotein reductase] + O2 = (14S,15R)-epoxy-(5Z,8Z,11Z)-eicosatrienoate + oxidized [NADPH--hemoprotein reductase] + H2O + H(+). It carries out the reaction (5Z,8Z,11Z,14Z,17Z)-eicosapentaenoate + reduced [NADPH--hemoprotein reductase] + O2 = 8,9-epoxy-(5Z,11Z,14Z,17Z)-eicosatetraenoate + oxidized [NADPH--hemoprotein reductase] + H2O + H(+). It catalyses the reaction (5Z,8Z,11Z,14Z,17Z)-eicosapentaenoate + reduced [NADPH--hemoprotein reductase] + O2 = 11,12-epoxy-(5Z,8Z,14Z,17Z)-eicosatetraenoate + oxidized [NADPH--hemoprotein reductase] + H2O + H(+). The catalysed reaction is (5Z,8Z,11Z,14Z,17Z)-eicosapentaenoate + reduced [NADPH--hemoprotein reductase] + O2 = 14,15-epoxy-(5Z,8Z,11Z,17Z)-eicosatetraenoate + oxidized [NADPH--hemoprotein reductase] + H2O + H(+). The enzyme catalyses (5Z,8Z,11Z,14Z,17Z)-eicosapentaenoate + reduced [NADPH--hemoprotein reductase] + O2 = (17R,18S)-epoxy-(5Z,8Z,11Z,14Z)-eicosatetraenoate + oxidized [NADPH--hemoprotein reductase] + H2O + H(+). It carries out the reaction cholesterol + reduced [NADPH--hemoprotein reductase] + O2 = 25-hydroxycholesterol + oxidized [NADPH--hemoprotein reductase] + H2O + H(+). It catalyses the reaction 17beta-estradiol + reduced [NADPH--hemoprotein reductase] + O2 = 2-hydroxy-17beta-estradiol + oxidized [NADPH--hemoprotein reductase] + H2O + H(+). The catalysed reaction is estrone + reduced [NADPH--hemoprotein reductase] + O2 = 2-hydroxyestrone + oxidized [NADPH--hemoprotein reductase] + H2O + H(+). The enzyme catalyses (5Z,8Z,11Z,14Z)-eicosatetraenoate + reduced [NADPH--hemoprotein reductase] + O2 = (11R)-hydroxy-(5Z,8Z,12E,14Z)-eicosatetraenoate + oxidized [NADPH--hemoprotein reductase] + H2O + H(+). It carries out the reaction (5Z,8Z,11Z,14Z)-eicosatetraenoate + reduced [NADPH--hemoprotein reductase] + O2 = (12R)-hydroxy-(5Z,8Z,10E,14Z)-eicosatetraenoate + oxidized [NADPH--hemoprotein reductase] + H2O + H(+). It catalyses the reaction (5Z,8Z,11Z,14Z)-eicosatetraenoate + reduced [NADPH--hemoprotein reductase] + O2 = (15R)-hydroxy-(5Z,8Z,11Z,13E)-eicosatetraenoate + oxidized [NADPH--hemoprotein reductase] + H2O + H(+). The catalysed reaction is (5Z,8Z,11Z,14Z)-eicosatetraenoate + reduced [NADPH--hemoprotein reductase] + O2 = 10-hydroxy-(5Z,8Z,11Z,14Z)-eicosatetraenoate + oxidized [NADPH--hemoprotein reductase] + H2O + H(+). The enzyme catalyses (9Z,12Z)-octadecadienoate + reduced [NADPH--hemoprotein reductase] + O2 = (13R)-hydroxy-(9Z,11E)-octadecadienoate + oxidized [NADPH--hemoprotein reductase] + H2O + H(+). It carries out the reaction (9Z,12Z)-octadecadienoate + reduced [NADPH--hemoprotein reductase] + O2 = (9R)-hydroxy-(10E,12Z)-octadecadienoate + oxidized [NADPH--hemoprotein reductase] + H2O + H(+). It catalyses the reaction (5Z,8Z,11Z,14Z)-eicosatetraenoate + reduced [NADPH--hemoprotein reductase] + O2 = 19-hydroxy-(5Z,8Z,11Z,14Z)-eicosatetraenoate + oxidized [NADPH--hemoprotein reductase] + H2O + H(+). The catalysed reaction is (5Z,8Z,11Z,14Z)-eicosatetraenoate + reduced [NADPH--hemoprotein reductase] + O2 = 13(S)-hydroxy-(5Z,8Z,11Z,14Z)-eicosatetraenoate + oxidized [NADPH--hemoprotein reductase] + H2O + H(+). The enzyme catalyses (5Z,8Z,11Z,14Z)-eicosatetraenoate + reduced [NADPH--hemoprotein reductase] + O2 = 14,15-epoxy-(5Z,8Z,11Z)-eicosatrienoate + oxidized [NADPH--hemoprotein reductase] + H2O + H(+). It carries out the reaction (5Z,8Z,11Z,14Z)-eicosatetraenoate + reduced [NADPH--hemoprotein reductase] + O2 = 11,12-epoxy-(5Z,8Z,14Z)-eicosatrienoate + oxidized [NADPH--hemoprotein reductase] + H2O + H(+). It catalyses the reaction (5Z,8Z,11Z,14Z)-eicosatetraenoate + reduced [NADPH--hemoprotein reductase] + O2 = 13-hydroxy-(5Z,8Z,11Z,14Z)-eicosatetraenoate + oxidized [NADPH--hemoprotein reductase] + H2O + H(+). The catalysed reaction is (4R)-limonene + reduced [NADPH--hemoprotein reductase] + O2 = (1R,5S)-carveol + oxidized [NADPH--hemoprotein reductase] + H2O + H(+). The enzyme catalyses (4S)-limonene + reduced [NADPH--hemoprotein reductase] + O2 = (1S,5R)-carveol + oxidized [NADPH--hemoprotein reductase] + H2O + H(+). It carries out the reaction (4S)-limonene + reduced [NADPH--hemoprotein reductase] + O2 = (4S)-perillyl alcohol + oxidized [NADPH--hemoprotein reductase] + H2O + H(+). It participates in lipid metabolism; arachidonate metabolism. Its pathway is steroid metabolism; cholesterol metabolism. The protein operates within terpene metabolism; (4R)-limonene degradation. A cytochrome P450 monooxygenase involved in the metabolism of various endogenous substrates, including fatty acids and steroids. Mechanistically, uses molecular oxygen inserting one oxygen atom into a substrate, and reducing the second into a water molecule, with two electrons provided by NADPH via cytochrome P450 reductase (NADPH--hemoprotein reductase). Catalyzes the epoxidation of double bonds of polyunsaturated fatty acids (PUFA). Catalyzes the hydroxylation of carbon-hydrogen bonds. Metabolizes cholesterol toward 25-hydroxycholesterol, a physiological regulator of cellular cholesterol homeostasis. Exhibits low catalytic activity for the formation of catechol estrogens from 17beta-estradiol (E2) and estrone (E1), namely 2-hydroxy E1 and E2. Catalyzes bisallylic hydroxylation and hydroxylation with double-bond migration of polyunsaturated fatty acids (PUFA). Also metabolizes plant monoterpenes such as limonene. Oxygenates (R)- and (S)-limonene to produce carveol and perillyl alcohol. Contributes to the wide pharmacokinetics variability of the metabolism of drugs such as S-warfarin, diclofenac, phenytoin, tolbutamide and losartan. The protein is Cytochrome P450 2C9 of Homo sapiens (Human).